The primary structure comprises 406 residues: Tryptophan synthase beta chain (406 aa).

Position 99 is an N6-(pyridoxal phosphate)lysine (lysine 99).

This sequence belongs to the TrpB family. Tetramer of two alpha and two beta chains. Pyridoxal 5'-phosphate is required as a cofactor.

The catalysed reaction is (1S,2R)-1-C-(indol-3-yl)glycerol 3-phosphate + L-serine = D-glyceraldehyde 3-phosphate + L-tryptophan + H2O. It functions in the pathway amino-acid biosynthesis; L-tryptophan biosynthesis; L-tryptophan from chorismate: step 5/5. The beta subunit is responsible for the synthesis of L-tryptophan from indole and L-serine. The sequence is that of Tryptophan synthase beta chain from Rhizobium meliloti (strain 1021) (Ensifer meliloti).